The chain runs to 355 residues: Erythronate-4-phosphate dehydrogenase (355 aa).

2 residues coordinate substrate: Ser-45 and Thr-66. Asp-146 is a binding site for NAD(+). Arg-206 is an active-site residue. Residue Asp-229 coordinates NAD(+). The active site involves Glu-234. The active-site Proton donor is the His-251. Gly-254 lines the NAD(+) pocket. Substrate is bound at residue Tyr-255.

Belongs to the D-isomer specific 2-hydroxyacid dehydrogenase family. PdxB subfamily. As to quaternary structure, homodimer.

It localises to the cytoplasm. The enzyme catalyses 4-phospho-D-erythronate + NAD(+) = (R)-3-hydroxy-2-oxo-4-phosphooxybutanoate + NADH + H(+). It participates in cofactor biosynthesis; pyridoxine 5'-phosphate biosynthesis; pyridoxine 5'-phosphate from D-erythrose 4-phosphate: step 2/5. Functionally, catalyzes the oxidation of erythronate-4-phosphate to 3-hydroxy-2-oxo-4-phosphonooxybutanoate. The protein is Erythronate-4-phosphate dehydrogenase of Acinetobacter baylyi (strain ATCC 33305 / BD413 / ADP1).